We begin with the raw amino-acid sequence, 182 residues long: Succinate dehydrogenase cytochrome b560 subunit, mitochondrial (182 aa).

Residues 65–94 (LTWMLSGFHRISGCVMAGTLLVGGIGFAVL) traverse the membrane as a helical segment. Residues 95-114 (PFDFTAFVDFIRSWNLPCAV) are Mitochondrial intermembrane-facing. A helical membrane pass occupies residues 115 to 139 (TAVFKYIIAFPIIFHTLNGIRFLGF). Histidine 129 lines the heme pocket. Topologically, residues 140–147 (DLAKGVNN) are mitochondrial matrix. A helical membrane pass occupies residues 148–169 (VGQIYKSGYLVSGLSAILALAI). Topologically, residues 170 to 172 (VFN) are mitochondrial intermembrane.

It belongs to the cytochrome b560 family. In terms of assembly, component of complex II composed of four subunits: a flavoprotein (FP), iron-sulfur protein (IP), and a cytochrome b560 composed of two integral membrane proteins. Heme is required as a cofactor.

Its subcellular location is the mitochondrion inner membrane. It participates in carbohydrate metabolism; tricarboxylic acid cycle. Its function is as follows. Membrane-anchoring subunit of succinate dehydrogenase (SDH) that is involved in complex II of the mitochondrial electron transport chain and is responsible for transferring electrons from succinate to ubiquinone (coenzyme Q). Mediates resistance to enteropathogenic E.coli infection. This is Succinate dehydrogenase cytochrome b560 subunit, mitochondrial (mev-1) from Caenorhabditis elegans.